The sequence spans 575 residues: 2-succinyl-5-enolpyruvyl-6-hydroxy-3-cyclohexene-1-carboxylate synthase (575 aa).

The protein belongs to the TPP enzyme family. MenD subfamily. As to quaternary structure, homodimer. It depends on Mg(2+) as a cofactor. Mn(2+) is required as a cofactor. Requires thiamine diphosphate as cofactor.

It carries out the reaction isochorismate + 2-oxoglutarate + H(+) = 5-enolpyruvoyl-6-hydroxy-2-succinyl-cyclohex-3-ene-1-carboxylate + CO2. It participates in quinol/quinone metabolism; 1,4-dihydroxy-2-naphthoate biosynthesis; 1,4-dihydroxy-2-naphthoate from chorismate: step 2/7. It functions in the pathway quinol/quinone metabolism; menaquinone biosynthesis. Functionally, catalyzes the thiamine diphosphate-dependent decarboxylation of 2-oxoglutarate and the subsequent addition of the resulting succinic semialdehyde-thiamine pyrophosphate anion to isochorismate to yield 2-succinyl-5-enolpyruvyl-6-hydroxy-3-cyclohexene-1-carboxylate (SEPHCHC). The sequence is that of 2-succinyl-5-enolpyruvyl-6-hydroxy-3-cyclohexene-1-carboxylate synthase from Syntrophus aciditrophicus (strain SB).